Consider the following 966-residue polypeptide: Valine--tRNA ligase (966 aa).

The short motif at 48–58 is the 'HIGH' region element; sequence PNITGGLHLGH. The stretch at 348-368 forms a coiled coil; it reads DYKDARKKIIEECKRLKILED. The 'KMSKS' region motif lies at 566–570; that stretch reads KMSKS. Position 569 (K569) interacts with ATP. The stretch at 939–960 forms a coiled coil; that stretch reads FKKSQEKLNHYNKTKNKLLNQY.

The protein belongs to the class-I aminoacyl-tRNA synthetase family. ValS type 1 subfamily. Monomer.

Its subcellular location is the cytoplasm. The enzyme catalyses tRNA(Val) + L-valine + ATP = L-valyl-tRNA(Val) + AMP + diphosphate. Its function is as follows. Catalyzes the attachment of valine to tRNA(Val). As ValRS can inadvertently accommodate and process structurally similar amino acids such as threonine, to avoid such errors, it has a 'posttransfer' editing activity that hydrolyzes mischarged Thr-tRNA(Val) in a tRNA-dependent manner. The chain is Valine--tRNA ligase from Blochmanniella floridana.